The following is a 264-amino-acid chain: MVKPLPRLRLQGFNNLTKALSFNIYDVCYARTEEERQRYIEYIDEQYDADRLTQILTDVAEIIGANILNIARQDYDPQGASVTILISEEPVIDKKQAGKELISDAVVAHMDKSHITVHTYPETHPQEGIATFRADIDVATCGVISPLKALNYLIESLESDIVIMDYRVRGFTRDVKGKKHYIDHKINSIQHFLAKNVKSRYEMFDVNVYQENIFHTKMHLKDFDLDQYLFEERAKNLSFKERMKIETLLKREIEELFHGRNLSE.

Ser-113 acts as the Schiff-base intermediate with substrate; via pyruvic acid in catalysis. Pyruvic acid (Ser); by autocatalysis is present on Ser-113. His-118 acts as the Proton acceptor; for processing activity in catalysis. Cys-141 acts as the Proton donor; for catalytic activity in catalysis.

It belongs to the prokaryotic AdoMetDC family. Type 2 subfamily. Heterooctamer of four alpha and four beta chains arranged as a tetramer of alpha/beta heterodimers. Pyruvate is required as a cofactor. Post-translationally, is synthesized initially as an inactive proenzyme. Formation of the active enzyme involves a self-maturation process in which the active site pyruvoyl group is generated from an internal serine residue via an autocatalytic post-translational modification. Two non-identical subunits are generated from the proenzyme in this reaction, and the pyruvate is formed at the N-terminus of the alpha chain, which is derived from the carboxyl end of the proenzyme. The post-translation cleavage follows an unusual pathway, termed non-hydrolytic serinolysis, in which the side chain hydroxyl group of the serine supplies its oxygen atom to form the C-terminus of the beta chain, while the remainder of the serine residue undergoes an oxidative deamination to produce ammonia and the pyruvoyl group blocking the N-terminus of the alpha chain.

The catalysed reaction is S-adenosyl-L-methionine + H(+) = S-adenosyl 3-(methylsulfanyl)propylamine + CO2. It functions in the pathway amine and polyamine biosynthesis; S-adenosylmethioninamine biosynthesis; S-adenosylmethioninamine from S-adenosyl-L-methionine: step 1/1. Its function is as follows. Catalyzes the decarboxylation of S-adenosylmethionine to S-adenosylmethioninamine (dcAdoMet), the propylamine donor required for the synthesis of the polyamines spermine and spermidine from the diamine putrescine. This chain is S-adenosylmethionine decarboxylase proenzyme, found in Xanthomonas campestris pv. campestris (strain B100).